Reading from the N-terminus, the 158-residue chain is Succinate dehydrogenase [ubiquinone] cytochrome b small subunit B, mitochondrial (158 aa).

The N-terminal 29 residues, 1–29, are a transit peptide targeting the mitochondrion; that stretch reads MAALVRISSLCHRGVSPLLFRPSSLIRPL. The Mitochondrial matrix portion of the chain corresponds to 30 to 62; it reads AVQQKDHDCSYLISARIHATPSNYAGSGSKAAT. Residues 63–84 form a helical membrane-spanning segment; that stretch reads MHWTGERILSIALLSLAPVAYF. Residues 85–89 are Mitochondrial intermembrane-facing; that stretch reads CPSPA. A helical membrane pass occupies residues 90–110; it reads VDYSLAAALTLHGHWGLGQVV. H101 contacts heme b. The Mitochondrial matrix portion of the chain corresponds to 111 to 119; the sequence is TDYVHGDAK. Y113 is a binding site for a ubiquinone. The chain crosses the membrane as a helical span at residues 120–141; the sequence is IKMANAGLFVLSTVTFAGLCYF. The Mitochondrial intermembrane segment spans residues 142–158; it reads NYHDVGICKAVALLWSK.

It belongs to the CybS family. As to quaternary structure, component of complex II composed of four subunits: the flavoprotein (FP) SDHA, iron-sulfur protein (IP) SDHB, and a cytochrome b560 composed of SDHC and SDHD.

Its subcellular location is the mitochondrion inner membrane. Its pathway is carbohydrate metabolism; tricarboxylic acid cycle. Membrane-anchoring subunit of succinate dehydrogenase (SDH) that is involved in complex II of the mitochondrial electron transport chain and is responsible for transferring electrons from succinate to ubiquinone (coenzyme Q). SDH also oxidizes malate to the non-canonical enol form of oxaloacetate, enol-oxaloacetate. Enol-oxaloacetate, which is a potent inhibitor of the succinate dehydrogenase activity, is further isomerized into keto-oxaloacetate. This is Succinate dehydrogenase [ubiquinone] cytochrome b small subunit B, mitochondrial (sdhdb) from Danio rerio (Zebrafish).